A 240-amino-acid polypeptide reads, in one-letter code: Adenosylcobinamide-GDP ribazoletransferase (240 aa).

The next 5 membrane-spanning stretches (helical) occupy residues leucine 31 to leucine 51, alanine 62 to alanine 81, isoleucine 109 to valine 129, isoleucine 133 to leucine 153, and valine 179 to leucine 199.

Belongs to the CobS family. The cofactor is Mg(2+).

It localises to the cell inner membrane. The catalysed reaction is alpha-ribazole + adenosylcob(III)inamide-GDP = adenosylcob(III)alamin + GMP + H(+). The enzyme catalyses alpha-ribazole 5'-phosphate + adenosylcob(III)inamide-GDP = adenosylcob(III)alamin 5'-phosphate + GMP + H(+). The protein operates within cofactor biosynthesis; adenosylcobalamin biosynthesis; adenosylcobalamin from cob(II)yrinate a,c-diamide: step 7/7. Functionally, joins adenosylcobinamide-GDP and alpha-ribazole to generate adenosylcobalamin (Ado-cobalamin). Also synthesizes adenosylcobalamin 5'-phosphate from adenosylcobinamide-GDP and alpha-ribazole 5'-phosphate. The protein is Adenosylcobinamide-GDP ribazoletransferase of Pseudomonas putida (strain ATCC 47054 / DSM 6125 / CFBP 8728 / NCIMB 11950 / KT2440).